We begin with the raw amino-acid sequence, 350 residues long: Ion-translocating oxidoreductase complex subunit D (350 aa).

A run of 4 helical transmembrane segments spans residues 20-40 (VMLWVILAALPGLLAQTLFFG), 42-62 (GNLINVVWCIALALGSEAAFL), 89-109 (LPQFTPWWVSGIAVVSAIVVA), and 120-140 (PFNPAMVGYALALISFPVAMT). At Thr178 the chain carries FMN phosphoryl threonine. The next 5 membrane-spanning stretches (helical) occupy residues 204–224 (LIARGWEWVNLAFLAGGVLLI), 228–248 (IITWHIPVAFLAGIAAMSLAF), 255–275 (YAPLQLHLLAGGTMLGAFFIA), 282–302 (ATSHQGKLIYGAGIGVLVYLI), and 306–326 (GNYPDAVAFSVLLMNFAVPFI).

The protein belongs to the NqrB/RnfD family. The complex is composed of six subunits: RnfA, RnfB, RnfC, RnfD, RnfE and RnfG. The cofactor is FMN.

The protein resides in the cell inner membrane. Part of a membrane-bound complex that couples electron transfer with translocation of ions across the membrane. The polypeptide is Ion-translocating oxidoreductase complex subunit D (Marinobacter nauticus (strain ATCC 700491 / DSM 11845 / VT8) (Marinobacter aquaeolei)).